The following is a 35-amino-acid chain: Potassium channel toxin alpha-KTx 6.15 (35 aa).

4 disulfides stabilise this stretch: cysteine 3–cysteine 24, cysteine 9–cysteine 29, cysteine 13–cysteine 31, and cysteine 19–cysteine 34.

It belongs to the short scorpion toxin superfamily. Potassium channel inhibitor family. Alpha-KTx 06 subfamily. Expressed by the venom gland.

It localises to the secreted. Blocks voltage-gated potassium channels rKv1.1/KCNA1 (IC(50)=13 nM), rKv1.2/KCNA2 (IC(50)=16 nM) and rKv1.3/KCNA3 (IC(50)=2 nM). This is Potassium channel toxin alpha-KTx 6.15 from Hemiscorpius lepturus (Scorpion).